We begin with the raw amino-acid sequence, 122 residues long: Alkaline proteinase inhibitor (122 aa).

Positions 1–25 (MPRFSHLIGCVWQVLFVSAGAQAMA) are cleaved as a signal peptide. Residues 101–122 (QKEGEYTGRTPSGADVTLQRTN) form a disordered region.

This sequence belongs to the protease inhibitor I38 family.

It localises to the periplasm. In terms of biological role, inhibitor of the alkaline protease. This chain is Alkaline proteinase inhibitor (inh), found in Pseudomonas tolaasii.